Consider the following 566-residue polypeptide: DNA ligase B (566 aa).

K125 (N6-AMP-lysine intermediate) is an active-site residue.

This sequence belongs to the NAD-dependent DNA ligase family. LigB subfamily.

It carries out the reaction NAD(+) + (deoxyribonucleotide)n-3'-hydroxyl + 5'-phospho-(deoxyribonucleotide)m = (deoxyribonucleotide)n+m + AMP + beta-nicotinamide D-nucleotide.. Catalyzes the formation of phosphodiester linkages between 5'-phosphoryl and 3'-hydroxyl groups in double-stranded DNA using NAD as a coenzyme and as the energy source for the reaction. This chain is DNA ligase B, found in Pseudomonas putida (strain ATCC 47054 / DSM 6125 / CFBP 8728 / NCIMB 11950 / KT2440).